The primary structure comprises 202 residues: ATP-dependent Clp protease proteolytic subunit (202 aa).

Ser106 acts as the Nucleophile in catalysis. The active site involves His131.

This sequence belongs to the peptidase S14 family. In terms of assembly, fourteen ClpP subunits assemble into 2 heptameric rings which stack back to back to give a disk-like structure with a central cavity, resembling the structure of eukaryotic proteasomes.

It is found in the cytoplasm. The catalysed reaction is Hydrolysis of proteins to small peptides in the presence of ATP and magnesium. alpha-casein is the usual test substrate. In the absence of ATP, only oligopeptides shorter than five residues are hydrolyzed (such as succinyl-Leu-Tyr-|-NHMec, and Leu-Tyr-Leu-|-Tyr-Trp, in which cleavage of the -Tyr-|-Leu- and -Tyr-|-Trp bonds also occurs).. Cleaves peptides in various proteins in a process that requires ATP hydrolysis. Has a chymotrypsin-like activity. Plays a major role in the degradation of misfolded proteins. The sequence is that of ATP-dependent Clp protease proteolytic subunit from Methylibium petroleiphilum (strain ATCC BAA-1232 / LMG 22953 / PM1).